The chain runs to 1558 residues: ABC transporter NFT1 (1558 aa).

Residues 1–29 (MIKNGTCPYWERDDLSECARREYIEFKFP) lie on the Extracellular side of the membrane. The N-linked (GlcNAc...) asparagine glycan is linked to N4. A helical transmembrane segment spans residues 30–50 (LFILLTGMIYAFCKVFRAFYL). Topologically, residues 51–103 (RGKNHTNEAPEFEEQGNGNHEYARFSVLRLKSAWESRSFCNVNNRSTFDKFKK) are cytoplasmic. Residues 104–124 (FIEGAFIVLQLTIHLYILSSM) traverse the membrane as a helical segment. Residues 125 to 130 (PMDNKK) lie on the Extracellular side of the membrane. A helical transmembrane segment spans residues 131-151 (FFHQGFLVQMFLWILLLVVIT). Over 152–169 (LRLISASQSFRWVLACKR) the chain is Cytoplasmic. The helical transmembrane segment at 170-190 (DLWAVSFYSYASLFTLSILPL) threads the bilayer. The Extracellular portion of the chain corresponds to 191 to 201 (RSVFIGKIKDK). Residues 202-222 (IMVKYIISETFIDLALLLLLS) traverse the membrane as a helical segment. At 223–302 (TSSIEGTRYS…SSKKGRLLPN (80 aa)) the chain is on the cytoplasmic side. A helical membrane pass occupies residues 303 to 323 (IICYFKAVFISQLFLAFVSSF). The region spanning 311 to 621 (FISQLFLAFV…IASTVSLLIQ (311 aa)) is the ABC transmembrane type-1 1 domain. Residues 324–351 (LNFVPSLLMPRILSYVNDPKSKSWNLVS) are Extracellular-facing. Residues 352–374 (LYVSSMLVSKIIATTCRGQGLFL) traverse the membrane as a helical segment. The Cytoplasmic segment spans residues 375-449 (GEKGTMQLRT…VMSIDAFKVS (75 aa)). The interval 410 to 434 (NASTSFEENPDSSEAEPRKKSSRKD) is disordered. The span at 424-434 (AEPRKKSSRKD) shows a compositional bias: basic and acidic residues. A helical membrane pass occupies residues 450–470 (EAMNTFYLACEAVFMTVTALM). Residues 471–481 (ILYSLLGWSAF) lie on the Extracellular side of the membrane. A helical transmembrane segment spans residues 482–504 (AGTFALLAMIPLNFWCATFYGNY). Topologically, residues 505-558 (QADQLILTDKRTSGISEALNSIRVIKLLAWENLFYQKIINVRDGEIRLLKKKAT) are cytoplasmic. A helical membrane pass occupies residues 559–579 (IFFLNHLIWFFGPTLVSAITF). The Extracellular portion of the chain corresponds to 580–584 (SVFIK). Residues 585-605 (FQNQTLTPTIAFTALSLFAIL) traverse the membrane as a helical segment. At 606–953 (RTPMDQIAST…KFSAYKWLAD (348 aa)) the chain is on the cytoplasmic side. The ABC transporter 1 domain maps to 651 to 892 (FGFEDASMEW…NEFLRESINN (242 aa)). 686–693 (GPTGSGKS) serves as a coordination point for ATP. A compositionally biased stretch (polar residues) spans 892–901 (NDSKNTTHNQ). The interval 892-926 (NDSKNTTHNQIDLKRSTTSKKTKNGDPEGGNSQDE) is disordered. A helical membrane pass occupies residues 954 to 974 (YFGGLGVVFVFTSSSILIHGI). The region spanning 961-1251 (VFVFTSSSIL…IIKVFSSVEL (291 aa)) is the ABC transmembrane type-1 2 domain. At 975–1013 (TLSQGFWLRYWLDTGSSGSKSTWLYRIVEGHSNIYFLLT) the chain is on the extracellular side. The helical transmembrane segment at 1014–1034 (YIIIGLVSSFLTSGKVWIAII) threads the bilayer. At 1035–1082 (SGTNVTKKIFAKLLSSILYAKLRFHNVTPTGRIMNRFSKDMDIIDQQL) the chain is on the cytoplasmic side. The helical transmembrane segment at 1083-1105 (IPNFEGLSYSVVVCLWIILLIGY) threads the bilayer. At 1106–1109 (VTPQ) the chain is on the extracellular side. A helical membrane pass occupies residues 1110-1132 (FLLFAIPLCALYYTVCTLYLRAS). Over 1133 to 1199 (RELKRIDNIN…ATEWITYRVD (67 aa)) the chain is Cytoplasmic. Residues 1200 to 1220 (IIGTLVLFSSSVMIIMKASYL) form a helical membrane-spanning segment. Topologically, residues 1221-1222 (DA) are extracellular. A helical transmembrane segment spans residues 1223 to 1243 (GLAGILLSNAFSFTETAQWII). Residues 1244–1558 (KVFSSVELLM…LAKVSFDNKR (315 aa)) are Cytoplasmic-facing. The 254-residue stretch at 1285 to 1538 (VELKNLSLRY…RNTIFYRLCR (254 aa)) folds into the ABC transporter 2 domain. 1319–1326 (GRTGAGKS) contributes to the ATP binding site.

It belongs to the ABC transporter superfamily. ABCC family. Conjugate transporter (TC 3.A.1.208) subfamily.

The protein localises to the membrane. The sequence is that of ABC transporter NFT1 (NFT1) from Saccharomyces cerevisiae (Baker's yeast).